Consider the following 671-residue polypeptide: Pescadillo homolog (671 aa).

Coiled-coil stretches lie at residues 294–323 and 548–584; these read NQAQAKAVKEAESKRSLMEEELHKVRELFR and QALRKAQEKSRQTETSEARLQRKMSEVKRQEAATRKM. Positions 317 to 403 constitute a BRCT domain; it reads KVRELFRGLT…LVLPVTGYRI (87 aa). Disordered regions lie at residues 552 to 577 and 634 to 671; these read KAQEKSRQTETSEARLQRKMSEVKRQ and GLVNKRLEARRQRAEAKGKKLKERKAGNPYKKLPKWVQ. A compositionally biased stretch (basic and acidic residues) spans 634–651; sequence GLVNKRLEARRQRAEAKG.

The protein belongs to the pescadillo family.

The protein resides in the nucleus. It is found in the nucleolus. It localises to the nucleoplasm. Required for maturation of ribosomal RNAs and formation of the large ribosomal subunit. This Leishmania major protein is Pescadillo homolog.